Reading from the N-terminus, the 322-residue chain is Acetyl-coenzyme A carboxylase carboxyl transferase subunit alpha (322 aa).

Positions 30–293 (AVDISAEILR…KKALQDSLKL (264 aa)) constitute a CoA carboxyltransferase C-terminal domain.

The protein belongs to the AccA family. As to quaternary structure, acetyl-CoA carboxylase is a heterohexamer composed of biotin carboxyl carrier protein (AccB), biotin carboxylase (AccC) and two subunits each of ACCase subunit alpha (AccA) and ACCase subunit beta (AccD).

It is found in the cytoplasm. The catalysed reaction is N(6)-carboxybiotinyl-L-lysyl-[protein] + acetyl-CoA = N(6)-biotinyl-L-lysyl-[protein] + malonyl-CoA. The protein operates within lipid metabolism; malonyl-CoA biosynthesis; malonyl-CoA from acetyl-CoA: step 1/1. In terms of biological role, component of the acetyl coenzyme A carboxylase (ACC) complex. First, biotin carboxylase catalyzes the carboxylation of biotin on its carrier protein (BCCP) and then the CO(2) group is transferred by the carboxyltransferase to acetyl-CoA to form malonyl-CoA. This Nitrosospira multiformis (strain ATCC 25196 / NCIMB 11849 / C 71) protein is Acetyl-coenzyme A carboxylase carboxyl transferase subunit alpha.